Reading from the N-terminus, the 1911-residue chain is Protein TIC 214 (1911 aa).

6 helical membrane-spanning segments follow: residues 41 to 61, 81 to 103, 108 to 128, 147 to 167, 195 to 215, and 238 to 258; these read IINSVVIVGLYYGFMTTFSIG, ISATTGFIMGQLIIFISIYYAPL, GKPHTMTVLVLPYLLFNFFWN, FNIQCIFLNNFIFQLFNHFIL, IGWLIGHIFFIKCVGLVLFWI, and IFSILLFITCVYYLGRMPLPI. 3 disordered regions span residues 265-299, 798-817, and 1599-1647; these read ETSETEESEENEEESDIEITSEPKEQDEEEGSTEE, DSEEEETKEREKNKEKKEEN, and NQNQ…RKKK. The span at 268-297 shows a compositional bias: acidic residues; that stretch reads ETEESEENEEESDIEITSEPKEQDEEEGST. Basic and acidic residues-rich tracts occupy residues 1603 to 1615 and 1623 to 1635; these read QEKKQKLSQRDLG and QKQKKKEDGEKNY.

Belongs to the TIC214 family. In terms of assembly, part of the Tic complex.

It is found in the plastid. It localises to the chloroplast inner membrane. Its function is as follows. Involved in protein precursor import into chloroplasts. May be part of an intermediate translocation complex acting as a protein-conducting channel at the inner envelope. The polypeptide is Protein TIC 214 (Lemna minor (Common duckweed)).